Reading from the N-terminus, the 140-residue chain is Putative pre-16S rRNA nuclease (140 aa).

The protein belongs to the YqgF nuclease family.

Its subcellular location is the cytoplasm. Functionally, could be a nuclease involved in processing of the 5'-end of pre-16S rRNA. The protein is Putative pre-16S rRNA nuclease of Vibrio vulnificus (strain YJ016).